A 456-amino-acid chain; its full sequence is Cysteine--tRNA ligase (456 aa).

Cysteine 29 contributes to the Zn(2+) binding site. The short motif at 31-41 (PTVYDYAHVGN) is the 'HIGH' region element. Zn(2+)-binding residues include cysteine 209, histidine 234, and glutamate 238. The short motif at 267 to 271 (KMSKS) is the 'KMSKS' region element. Lysine 270 contacts ATP.

The protein belongs to the class-I aminoacyl-tRNA synthetase family. Monomer. The cofactor is Zn(2+).

The protein resides in the cytoplasm. It catalyses the reaction tRNA(Cys) + L-cysteine + ATP = L-cysteinyl-tRNA(Cys) + AMP + diphosphate. In Rhodospirillum centenum (strain ATCC 51521 / SW), this protein is Cysteine--tRNA ligase.